Reading from the N-terminus, the 492-residue chain is GTPase Der (492 aa).

One can recognise an EngA-type G 1 domain in the interval P3–A166. Residues G9–S16, D56–I60, and N118–D121 each bind GTP. A disordered region spans residues A166–G190. Over residues E168–E181 the composition is skewed to acidic residues. The EngA-type G 2 domain maps to I197–V370. GTP is bound by residues G203–S210, D250–V254, and N315–D318. In terms of domain architecture, KH-like spans T371 to E455. The disordered stretch occupies residues G453–K492. Residues N461–V470 show a composition bias toward basic and acidic residues. Residues N471–K492 show a composition bias toward basic residues.

It belongs to the TRAFAC class TrmE-Era-EngA-EngB-Septin-like GTPase superfamily. EngA (Der) GTPase family. As to quaternary structure, associates with the 50S ribosomal subunit.

GTPase that plays an essential role in the late steps of ribosome biogenesis. This chain is GTPase Der, found in Ectopseudomonas mendocina (strain ymp) (Pseudomonas mendocina).